We begin with the raw amino-acid sequence, 637 residues long: Chaperone protein DnaK (637 aa).

Position 196 is a phosphothreonine; by autocatalysis (Thr-196). Disordered regions lie at residues 484-528 and 598-637; these read KATG…EVDT and TEAG…VDDK. A compositionally biased stretch (basic and acidic residues) spans 501–528; that stretch reads SETEIEKMKKDASSHADEDKKKKEEVDT. A compositionally biased stretch (low complexity) spans 600–620; it reads AGAPGAAGAAGAAGQGQSASS. Residues 621-637 show a composition bias toward basic and acidic residues; sequence GKDDEVKNADFEVVDDK.

Belongs to the heat shock protein 70 family.

Its function is as follows. Acts as a chaperone. The chain is Chaperone protein DnaK from Chloroherpeton thalassium (strain ATCC 35110 / GB-78).